The chain runs to 140 residues: Nucleoside diphosphate kinase (140 aa).

Residues K11, F59, R87, T93, R104, and N114 each contribute to the ATP site. H117 functions as the Pros-phosphohistidine intermediate in the catalytic mechanism.

The protein belongs to the NDK family. As to quaternary structure, homotetramer. The cofactor is Mg(2+).

It is found in the cytoplasm. It catalyses the reaction a 2'-deoxyribonucleoside 5'-diphosphate + ATP = a 2'-deoxyribonucleoside 5'-triphosphate + ADP. The enzyme catalyses a ribonucleoside 5'-diphosphate + ATP = a ribonucleoside 5'-triphosphate + ADP. Functionally, major role in the synthesis of nucleoside triphosphates other than ATP. The ATP gamma phosphate is transferred to the NDP beta phosphate via a ping-pong mechanism, using a phosphorylated active-site intermediate. The polypeptide is Nucleoside diphosphate kinase (Sphingopyxis alaskensis (strain DSM 13593 / LMG 18877 / RB2256) (Sphingomonas alaskensis)).